The chain runs to 345 residues: Histone H3-like centromeric protein cpar-1 (345 aa).

Residues 117-246 form a disordered region; the sequence is NHSNRKPLEE…SRVTKTHNRK (130 aa). Residues 122-149 show a composition bias toward basic and acidic residues; sequence KPLEESRRREEPRDRVHESNIDITHRGD. Residues 233–246 show a composition bias toward basic residues; it reads RSGKSRVTKTHNRK. The H3-like stretch occupies residues 263–340; sequence STDMLIQKAP…TDIQLYRRLC (78 aa).

This sequence belongs to the histone H3 family. Forms a nucleosome-like histone octamer containing two molecules each of H2A, H2B, cpar-1 and H4 assembled in one cpar-1-H4 heterotetramer and two H2A-H2B heterodimers. Post-translationally, cleaved at the onset of meiotic anaphase I, likely by separase sep-1.

It is found in the nucleus. The protein resides in the chromosome. Histone H3-like variant which exclusively replaces conventional H3 in the nucleosome core of centromeric chromatin at the inner plate of the kinetochore. Required for recruitment and assembly of kinetochore proteins, mitotic progression and chromosome segregation. May serve as an epigenetic mark that propagates centromere identity through replication and cell division. Not required for chromosome segregation during meiosis. This is Histone H3-like centromeric protein cpar-1 from Caenorhabditis briggsae.